We begin with the raw amino-acid sequence, 193 residues long: Ion-translocating oxidoreductase complex subunit A (193 aa).

Transmembrane regions (helical) follow at residues 5–25 (LLLF…FLGL), 39–59 (IGMG…AWMV), 62–82 (FILL…LVIA), 102–122 (LLGI…VALL), 134–154 (AVYG…FAAI), and 171–191 (SIAL…TGLV).

This sequence belongs to the NqrDE/RnfAE family. In terms of assembly, the complex is composed of six subunits: RnfA, RnfB, RnfC, RnfD, RnfE and RnfG.

It is found in the cell inner membrane. Its function is as follows. Part of a membrane-bound complex that couples electron transfer with translocation of ions across the membrane. This Yersinia pestis bv. Antiqua (strain Nepal516) protein is Ion-translocating oxidoreductase complex subunit A.